Consider the following 175-residue polypeptide: Isopentenyl-diphosphate Delta-isomerase (175 aa).

Mn(2+) is bound by residues His23 and His30. One can recognise a Nudix hydrolase domain in the interval 28–162 (TLHLAFCVFV…PLRYTPWFRR (135 aa)). Cys65 is a catalytic residue. His67 is a Mn(2+) binding site. Residue Glu85 participates in Mg(2+) binding. 2 residues coordinate Mn(2+): Glu111 and Glu113. Glu113 is an active-site residue.

It belongs to the IPP isomerase type 1 family. The cofactor is Mg(2+). Requires Mn(2+) as cofactor.

It localises to the cytoplasm. The catalysed reaction is isopentenyl diphosphate = dimethylallyl diphosphate. Its pathway is isoprenoid biosynthesis; dimethylallyl diphosphate biosynthesis; dimethylallyl diphosphate from isopentenyl diphosphate: step 1/1. In terms of biological role, catalyzes the 1,3-allylic rearrangement of the homoallylic substrate isopentenyl (IPP) to its highly electrophilic allylic isomer, dimethylallyl diphosphate (DMAPP). This Halorhodospira halophila (strain DSM 244 / SL1) (Ectothiorhodospira halophila (strain DSM 244 / SL1)) protein is Isopentenyl-diphosphate Delta-isomerase.